The primary structure comprises 498 residues: Dynein regulatory complex subunit 5 (498 aa).

2 disordered regions span residues 27-52 (ALGSSSTGPTSLKTSSTPTPGQLKTK) and 200-223 (MPTPLQGEEQSDSGSEGEGSEPEK). Residues 28–47 (LGSSSTGPTSLKTSSTPTPG) are compositionally biased toward low complexity. LRR repeat units follow at residues 276–299 (CHTLKIFKLTRSKVDDDKARILIR), 306–327 (ALEELDLSHNLIGDRGARAAAK), 333–353 (RLRVLNLANNQLQAPGAQSLA), 361–382 (NLVFLNLRLNCIEDEGGQAIAH), 389–409 (CLSVLHLGGNKLSEPTATLLS), and 417–438 (TLVSLNLSCNHIGQDGGKQLLE).

The protein belongs to the DRC5 family. As to quaternary structure, component of the nexin-dynein regulatory complex (N-DRC). Interacts with DRC1. Interacts with FBXL13/DRC6, DRC3 and DRC7. In terms of tissue distribution, testis-specific (at protein level).

It is found in the cell projection. It localises to the cilium. The protein localises to the flagellum. Its subcellular location is the cytoplasm. The protein resides in the cytoskeleton. It is found in the flagellum axoneme. Functionally, component of the nexin-dynein regulatory complex (N-DRC) a key regulator of ciliary/flagellar motility which maintains the alignment and integrity of the distal axoneme and regulates microtubule sliding in motile axonemes. May play a role in the assembly of N-DRC. Required for sperm motility. This is Dynein regulatory complex subunit 5 (Tcte1) from Mus musculus (Mouse).